We begin with the raw amino-acid sequence, 167 residues long: Phosphopantetheine adenylyltransferase (167 aa).

A substrate-binding site is contributed by S9. ATP-binding positions include 9-10 (SF) and H17. Substrate contacts are provided by K41, L73, and K87. ATP contacts are provided by residues 88-90 (GLR), E98, and 123-129 (YSYLSSS).

It belongs to the bacterial CoaD family. As to quaternary structure, homohexamer. Requires Mg(2+) as cofactor.

Its subcellular location is the cytoplasm. The enzyme catalyses (R)-4'-phosphopantetheine + ATP + H(+) = 3'-dephospho-CoA + diphosphate. It participates in cofactor biosynthesis; coenzyme A biosynthesis; CoA from (R)-pantothenate: step 4/5. Reversibly transfers an adenylyl group from ATP to 4'-phosphopantetheine, yielding dephospho-CoA (dPCoA) and pyrophosphate. This is Phosphopantetheine adenylyltransferase from Caldicellulosiruptor bescii (strain ATCC BAA-1888 / DSM 6725 / KCTC 15123 / Z-1320) (Anaerocellum thermophilum).